We begin with the raw amino-acid sequence, 46 residues long: Major urinary protein (46 aa).

An N-linked (GlcNAc...) asparagine glycan is attached at Asn-15.

This sequence belongs to the calycin superfamily. Lipocalin family. In terms of tissue distribution, found in many tissues including liver, urine, preputial gland, clitoral gland, submandibular gland and salivary gland.

Its subcellular location is the secreted. Binds pheromones that are released from drying urine of males. These pheromones affect the sexual behavior of females. Acts as a shuttle for pheromonal communication between individuals of the same species. In Rattus rattus (Black rat), this protein is Major urinary protein.